The following is a 149-amino-acid chain: MHCPFCSENDTKVIDSRLVADGHQVRRRRQCLACSERFTTFETAELVMPKVIKSNGNREPFDEDKMVGGIQRALEKRPVSADSIELAISMIKSQLRATGEREVPSQMIGNLVMDQLKELDKVAYIRFASVYRSFEDIREFGEEIARLED.

Residues 3 to 34 (CPFCSENDTKVIDSRLVADGHQVRRRRQCLAC) fold into a zinc finger. Residues 49–139 (PKVIKSNGNR…VYRSFEDIRE (91 aa)) form the ATP-cone domain.

Belongs to the NrdR family. Zn(2+) serves as cofactor.

Functionally, negatively regulates transcription of bacterial ribonucleotide reductase nrd genes and operons by binding to NrdR-boxes. This Vibrio parahaemolyticus serotype O3:K6 (strain RIMD 2210633) protein is Transcriptional repressor NrdR.